A 112-amino-acid polypeptide reads, in one-letter code: UPF0102 protein CHAB381_0216 (112 aa).

This sequence belongs to the UPF0102 family.

The sequence is that of UPF0102 protein CHAB381_0216 from Campylobacter hominis (strain ATCC BAA-381 / DSM 21671 / CCUG 45161 / LMG 19568 / NCTC 13146 / CH001A).